A 419-amino-acid chain; its full sequence is Putative nickel insertion protein (419 aa).

The interval 69 to 90 is disordered; sequence HDPSNHPSQNTHHHHHHHTRHL. Positions 79-88 are enriched in basic residues; it reads THHHHHHHTR.

The protein belongs to the LarC family.

This is Putative nickel insertion protein from Rippkaea orientalis (strain PCC 8801 / RF-1) (Cyanothece sp. (strain PCC 8801)).